The following is a 329-amino-acid chain: Biotin synthase (329 aa).

The 225-residue stretch at 36 to 260 (GEIQLCTLLS…VAVARITMPK (225 aa)) folds into the Radical SAM core domain. Residues C51, C55, and C58 each coordinate [4Fe-4S] cluster. 4 residues coordinate [2Fe-2S] cluster: C95, C126, C186, and R264.

The protein belongs to the radical SAM superfamily. Biotin synthase family. As to quaternary structure, homodimer. It depends on [4Fe-4S] cluster as a cofactor. [2Fe-2S] cluster is required as a cofactor.

The catalysed reaction is (4R,5S)-dethiobiotin + (sulfur carrier)-SH + 2 reduced [2Fe-2S]-[ferredoxin] + 2 S-adenosyl-L-methionine = (sulfur carrier)-H + biotin + 2 5'-deoxyadenosine + 2 L-methionine + 2 oxidized [2Fe-2S]-[ferredoxin]. It functions in the pathway cofactor biosynthesis; biotin biosynthesis; biotin from 7,8-diaminononanoate: step 2/2. Its function is as follows. Catalyzes the conversion of dethiobiotin (DTB) to biotin by the insertion of a sulfur atom into dethiobiotin via a radical-based mechanism. This is Biotin synthase from Sphingopyxis alaskensis (strain DSM 13593 / LMG 18877 / RB2256) (Sphingomonas alaskensis).